Here is a 452-residue protein sequence, read N- to C-terminus: MRECISVHVGQAGVQIGNACWELYCLEHGIQPDGQMPSDKTIGGGDDSFNTFFSETGAGKHVPRAVFVDLEPTVIDEVRTGTYRQLFHPEQLITGKEDAANNYARGHYTIGKELIDLVLDRIRKLADQCTGLQGFLIFHSFGGGTGSGFTSLLMERLSVDYGKKSKLEFSIYPAPQVSTAVVEPYNSILTTHTTLEHSDCAFMVDNEAIYDICRRNLDIERPTYTNLNRLIGQIVSSITASLRFDGALNVDLTEFQTNLVPYPRIHFPLATYAPVISAEKAYHEQLSVAEITNACFEPANQMVKCDPRHGKYMACCLLYRGDVVPKDVNAAIATIKTKRTIQFVDWCPTGFKVGINYQPPTVVPGGDLAKVQRAVCMLSNTTAIAEAWARLDHKFDLMYAKRAFVHWYVGEGMEEGEFSEAREDMAALEKDYEEVGMDSVEGEGEEEEGDEY.

Residues 1 to 4 (MREC) carry the MREC motif motif. Q11 lines the GTP pocket. N6-acetyllysine is present on K40. Residues E71, S140, G144, T145, T179, N206, and N228 each coordinate GTP. Mg(2+) is bound at residue E71. E254 is an active-site residue. Y282 is subject to 3'-nitrotyrosine. Positions 432-452 (YEEVGMDSVEGEGEEEEGDEY) are disordered. Phosphoserine is present on S439. Residue E446 is modified to 5-glutamyl polyglutamate. At Y452 the chain carries 3'-nitrotyrosine.

This sequence belongs to the tubulin family. Dimer of alpha and beta chains. A typical microtubule is a hollow water-filled tube with an outer diameter of 25 nm and an inner diameter of 15 nM. Alpha-beta heterodimers associate head-to-tail to form protofilaments running lengthwise along the microtubule wall with the beta-tubulin subunit facing the microtubule plus end conferring a structural polarity. Microtubules usually have 13 protofilaments but different protofilament numbers can be found in some organisms and specialized cells. The cofactor is Mg(2+). In terms of processing, some glutamate residues at the C-terminus are polyglycylated, resulting in polyglycine chains on the gamma-carboxyl group. Glycylation is mainly limited to tubulin incorporated into axonemes (cilia and flagella) whereas glutamylation is prevalent in neuronal cells, centrioles, axonemes, and the mitotic spindle. Both modifications can coexist on the same protein on adjacent residues, and lowering polyglycylation levels increases polyglutamylation, and reciprocally. Cilia and flagella glycylation is required for their stability and maintenance. Flagella glycylation controls sperm motility. Post-translationally, some glutamate residues at the C-terminus are polyglutamylated, resulting in polyglutamate chains on the gamma-carboxyl group. Polyglutamylation plays a key role in microtubule severing by spastin (SPAST). SPAST preferentially recognizes and acts on microtubules decorated with short polyglutamate tails: severing activity by SPAST increases as the number of glutamates per tubulin rises from one to eight, but decreases beyond this glutamylation threshold. Glutamylation is also involved in cilia motility. Acetylation of alpha chains at Lys-40 is located inside the microtubule lumen. This modification has been correlated with increased microtubule stability, intracellular transport and ciliary assembly. In terms of processing, methylation of alpha chains at Lys-40 is found in mitotic microtubules and is required for normal mitosis and cytokinesis contributing to genomic stability. Post-translationally, nitration of Tyr-452 is irreversible and interferes with normal dynein intracellular distribution. Undergoes a tyrosination/detyrosination cycle, the cyclic removal and re-addition of a C-terminal tyrosine residue by the enzymes tubulin tyrosine carboxypeptidase (MATCAP, VASH1 or VASH2) and tubulin tyrosine ligase (TTL), respectively. In terms of processing, tyrosination promotes microtubule interaction with CAP-Gly domain-containing proteins such as CLIP1, CLIP2 and DCTN1. Tyrosination regulates the initiation of dynein-dynactin motility via interaction with DCTN1, which brings the dynein-dynactin complex into contact with microtubules. In neurons, tyrosinated tubulins mediate the initiation of retrograde vesicle transport. Post-translationally, detyrosination is involved in metaphase plate congression by guiding chromosomes during mitosis: detyrosination promotes interaction with CENPE, promoting pole-proximal transport of chromosomes toward the equator. Detyrosination increases microtubules-dependent mechanotransduction in dystrophic cardiac and skeletal muscle. In cardiomyocytes, detyrosinated microtubules are required to resist to contractile compression during contraction: detyrosination promotes association with desmin (DES) at force-generating sarcomeres, leading to buckled microtubules and mechanical resistance to contraction.

The protein resides in the cytoplasm. It localises to the cytoskeleton. It carries out the reaction GTP + H2O = GDP + phosphate + H(+). Functionally, tubulin is the major constituent of microtubules, a cylinder consisting of laterally associated linear protofilaments composed of alpha- and beta-tubulin heterodimers. Microtubules grow by the addition of GTP-tubulin dimers to the microtubule end, where a stabilizing cap forms. Below the cap, tubulin dimers are in GDP-bound state, owing to GTPase activity of alpha-tubulin. The chain is Tubulin alpha-1D chain (TUBA1D) from Bos taurus (Bovine).